The chain runs to 1036 residues: Cellulose synthase-like protein D1 (1036 aa).

The tract at residues 1-99 (MASSPPKKTL…GGGDGPKMGN (99 aa)) is disordered. Polar residues-rich tracts occupy residues 9 to 19 (TLNSQSSSLSR) and 69 to 80 (NQPAGSSGSTSE). Residues 86-95 (NRGGGGGDGP) are compositionally biased toward gly residues. Transmembrane regions (helical) follow at residues 178–198 (ILSP…FFLW) and 208–228 (AMWL…SWIL). Residue Asp-308 is part of the active site. The interval 626-665 (AMHVRTQSQASQTSQASDLESDTQPLNDDPDLGLPKKFGN) is disordered. The segment covering 631–642 (TQSQASQTSQAS) has biased composition (low complexity). Asp-741 is a catalytic residue. 6 consecutive transmembrane segments (helical) span residues 817 to 837 (IYPF…LCLF), 848 to 868 (IHFL…SLLE), 895 to 915 (LAAV…SFTL), 938 to 958 (GLFI…VIGA), 962 to 982 (IYSV…SLWV), and 1002 to 1022 (TIVY…WITI).

It belongs to the glycosyltransferase 2 family. Plant cellulose synthase-like D subfamily.

The protein resides in the golgi apparatus membrane. Thought to be a Golgi-localized beta-glycan synthase that polymerize the backbones of noncellulosic polysaccharides (hemicelluloses) of plant cell wall. The chain is Cellulose synthase-like protein D1 (CSLD1) from Arabidopsis thaliana (Mouse-ear cress).